Reading from the N-terminus, the 190-residue chain is dCTP deaminase, dUMP-forming (190 aa).

Residues 101 to 106 (KSSLGR), aspartate 119, 127 to 129 (TLE), glutamine 148, tyrosine 162, and glutamine 174 each bind dCTP. Residue glutamate 129 is the Proton donor/acceptor of the active site. The disordered stretch occupies residues 162-190 (YGSASAGSKYQGQRGPTPSRSYENFIKNT). Positions 166–190 (SAGSKYQGQRGPTPSRSYENFIKNT) are enriched in polar residues.

This sequence belongs to the dCTP deaminase family. In terms of assembly, homotrimer.

It catalyses the reaction dCTP + 2 H2O = dUMP + NH4(+) + diphosphate. The protein operates within pyrimidine metabolism; dUMP biosynthesis; dUMP from dCTP: step 1/1. Bifunctional enzyme that catalyzes both the deamination of dCTP to dUTP and the hydrolysis of dUTP to dUMP without releasing the toxic dUTP intermediate. This chain is dCTP deaminase, dUMP-forming, found in Mycobacterium leprae (strain Br4923).